A 1347-amino-acid polypeptide reads, in one-letter code: Protocadherin-11 X-linked (1347 aa).

Residues 1 to 23 (MDLLSGTYIFAVLLACVVFHSGA) form the signal peptide. The Extracellular segment spans residues 24 to 812 (QEKNYTIREE…VSSPTNDYVK (789 aa)). 7 consecutive Cadherin domains span residues 26–139 (KNYT…APLF), 140–249 (PATV…HPVF), 250–355 (KETE…VPSI), 362–466 (NPVN…APVF), 467–570 (TQSF…SPVF), 571–673 (THNE…KPVF), and 677–795 (PSNY…APVT). Residues Asn27, Asn48, and Asn54 are each glycosylated (N-linked (GlcNAc...) asparagine). N-linked (GlcNAc...) asparagine glycosylation occurs at Asn344. N-linked (GlcNAc...) asparagine glycosylation occurs at Asn553. Residue Asn773 is glycosylated (N-linked (GlcNAc...) asparagine). A helical membrane pass occupies residues 813–833 (ILVAAVAGTITVVVVIFITAV). Over 834 to 1347 (VRCRQAPHLK…DSPIMEEHPL (514 aa)) the chain is Cytoplasmic. Disordered regions lie at residues 1057–1091 (LPEGSQESSSDGGLGDHDAGSLTSTSHGLPLGYPQ), 1097–1116 (RATPSNRTEGDGNSDPESTF), and 1326–1347 (FTPRQQARPSRGDSPIMEEHPL).

It is found in the cell membrane. Functionally, potential calcium-dependent cell-adhesion protein. This Gorilla gorilla gorilla (Western lowland gorilla) protein is Protocadherin-11 X-linked (PCDH11X).